Here is a 495-residue protein sequence, read N- to C-terminus: Glycogen synthase (495 aa).

Position 15 (lysine 15) interacts with ADP-alpha-D-glucose.

This sequence belongs to the glycosyltransferase 1 family. Bacterial/plant glycogen synthase subfamily.

The catalysed reaction is [(1-&gt;4)-alpha-D-glucosyl](n) + ADP-alpha-D-glucose = [(1-&gt;4)-alpha-D-glucosyl](n+1) + ADP + H(+). It participates in glycan biosynthesis; glycogen biosynthesis. Synthesizes alpha-1,4-glucan chains using ADP-glucose. This is Glycogen synthase from Variovorax paradoxus (strain S110).